Here is a 1021-residue protein sequence, read N- to C-terminus: Probable calcium-transporting ATPase 6, plasma membrane-type (1021 aa).

Residues 1–155 (MEGGRSWSIE…RSFWMFVWDA (155 aa)) are Cytoplasmic-facing. The next 2 membrane-spanning stretches (helical) occupy residues 156–176 (LHDLTLIILVVCALVSIVVGL) and 181–201 (WPMGIYDGFGIILSILLVVLV). Topologically, residues 202–241 (TATSDYQQARKFMELDREKQKIYIRVTRDKKTKEVLVHDL) are cytoplasmic. 2 consecutive transmembrane segments (helical) span residues 242 to 262 (VVGDILHLSIGDVVPADGLFI) and 338 to 358 (VATIIGQIGLVFAVLTFLVLL). Residues 359-384 (ARFLADKGMHVGLLNWSANDALTIVN) are Cytoplasmic-facing. The chain crosses the membrane as a helical span at residues 385-405 (YFAIAVTIIVVAVPEGLPLAV). The active-site 4-aspartylphosphate intermediate is aspartate 441. Residues aspartate 740 and aspartate 744 each coordinate Mg(2+). Residues 807-827 (IVALIVNFVSACIIGSAPLTA) traverse the membrane as a helical segment. The Cytoplasmic portion of the chain corresponds to 828-829 (VQ). A run of 2 helical transmembrane segments spans residues 830 to 850 (LLWVNMIMDTLGALALATEPP) and 879 to 899 (GLYQLLVLATLMVIGKKLLSI). The Cytoplasmic portion of the chain corresponds to 900–942 (EGPQSDKTINTLIFNSFVFCQVFNEINCREMEKINVLQGIFRN). Helical transmembrane passes span 943–963 (WIFVGILTATVIFQVIIVEFL) and 974–994 (GELWLLSVVIGSISMIISVIL). Residues 995–1021 (KCIPVEFNKTNTKPHGYELIPEGPEIL) lie on the Cytoplasmic side of the membrane.

The protein belongs to the cation transport ATPase (P-type) (TC 3.A.3) family. Type IIB subfamily.

Its subcellular location is the membrane. It catalyses the reaction Ca(2+)(in) + ATP + H2O = Ca(2+)(out) + ADP + phosphate + H(+). Activated by calmodulin. Functionally, this magnesium-dependent enzyme catalyzes the hydrolysis of ATP coupled with the translocation of calcium from the cytosol out of the cell, into the endoplasmic reticulum, or into organelles. The polypeptide is Probable calcium-transporting ATPase 6, plasma membrane-type (Oryza sativa subsp. japonica (Rice)).